Here is a 403-residue protein sequence, read N- to C-terminus: Eukaryotic translation initiation factor 3 subunit H (403 aa).

One can recognise an MPN domain in the interval 57-206 (VRLDGLALTK…VKAYRLSPSF (150 aa)). The segment at 99–122 (ALPNPGRSNSERDEEEDRSSRNAT) is disordered.

Belongs to the eIF-3 subunit H family. Component of the eukaryotic translation initiation factor 3 (eIF-3) complex.

The protein resides in the cytoplasm. Component of the eukaryotic translation initiation factor 3 (eIF-3) complex, which is involved in protein synthesis of a specialized repertoire of mRNAs and, together with other initiation factors, stimulates binding of mRNA and methionyl-tRNAi to the 40S ribosome. The eIF-3 complex specifically targets and initiates translation of a subset of mRNAs involved in cell proliferation. The protein is Eukaryotic translation initiation factor 3 subunit H of Mycosarcoma maydis (Corn smut fungus).